Consider the following 659-residue polypeptide: Beta-galactosidase BgaA (659 aa).

Arginine 103 lines the substrate pocket. Cysteine 107 is a binding site for Zn(2+). Asparagine 141 contacts substrate. Glutamate 142 serves as the catalytic Proton donor. Zn(2+) is bound by residues cysteine 148, cysteine 150, and cysteine 153. Glutamate 298 acts as the Nucleophile in catalysis. Residue tryptophan 307 coordinates substrate.

Belongs to the glycosyl hydrolase 42 family. Dimer.

It catalyses the reaction Hydrolysis of terminal non-reducing beta-D-galactose residues in beta-D-galactosides.. With respect to regulation, inhibited by Cu(2+), Hg(2+) and Zn(2+). No effect with Ca(2+), Mg(2+), Mn(2+) or excess EDTA (10 mM). In terms of biological role, involved in plant cell wall degradation in cooperation with cellulosome. Hydrolyzes both p-nitrophenyl-alpha-L-arabinopyranoside (pNPAp) and p-nitrophenyl-beta-D-galactopyranoside (pNPGp), with higher activity for pNPAp. Shows hydrolysis activity against p-nitrophenyl-beta-D-fucopyranoside (pNPFp), but not against p-nitrophenyl-alpha-L-arabinofuranoside (pNPAf), o-nitrophenyl-beta-D-galactopyranoside (oNPGp), p-nitrophenyl-beta-D-xylopyranoside (pNPXp), p-nitrophenyl-beta-D-glucopyranoside (pNPGLp), p-nitrophenyl-beta-D-cellobiopyranoside (pNPCp), p-nitrophenyl-beta-lactopyranoside (pNPLp) or p-nitrophenyl-alpha-galactopyranoside (pNPalphaGp). No detectable activity against arabinan or arabinoxylan, but activity against arabinogalactan can be detected. Increases degradation activity of alpha-L-arabinofuranosidase (ArfA) and endo-1,4-beta-xylanase (XynA) when corn fiber gum and corn stem powder are used as substrates. In Clostridium cellulovorans (strain ATCC 35296 / DSM 3052 / OCM 3 / 743B), this protein is Beta-galactosidase BgaA (bgaA).